The following is a 240-amino-acid chain: Cilia- and flagella-associated protein 77 (240 aa).

This sequence belongs to the CFAP77 family.

The protein resides in the cytoplasm. The protein localises to the cytoskeleton. Its subcellular location is the cilium axoneme. It is found in the flagellum axoneme. In terms of biological role, microtubule inner protein (MIP) part of the dynein-decorated doublet microtubules (DMTs) in cilia axoneme, which is required for motile cilia beating. The sequence is that of Cilia- and flagella-associated protein 77 from Danio rerio (Zebrafish).